The following is a 773-amino-acid chain: Leucine-rich repeat-containing protein let-4 (773 aa).

Positions 1 to 20 (MRLLLCLLLFSTLLINSTNA) are cleaved as a signal peptide. Over 21–689 (CPGVITQACF…RLEKSFFTTT (669 aa)) the chain is Extracellular. LRR repeat units follow at residues 61–84 (VGLI…FFSG), 85–107 (LFIR…AFAG), 109–132 (NPVL…ALAG), 133–157 (LPNL…IFPN), 159–181 (NKLY…TFQN), 183–206 (KNSI…AIRG), 207–230 (LKQL…NFLN), 231–254 (LPVL…AFLN), 256–278 (PSLR…QFQT), 279–302 (FEQL…SLSG), 303–326 (LKQL…AFTN), 328–349 (SIVV…IISG), 350–373 (LPNL…AFYD), 375–397 (ASLV…TFLA), 399–421 (LNLL…AFNS), and 486–516 (LVQI…AFQQ). Residues 690 to 710 (IIFICVGTAVIVLVVVIAGLC) traverse the membrane as a helical segment. Over 711–773 (ISKHRQLQFE…PGSSYCNYYK (63 aa)) the chain is Cytoplasmic.

As to expression, in L1 larvae, expressed in a subset of epithelial cells including epidermal, vulval and rectal cells and the excretory duct and pore. Absent from internal epithelia such as the gut and pharyngeal tubes. Transiently expressed in the excretory canal cell at the 1.5-fold embryonic stage but no longer visible in this cell at hatching.

Its subcellular location is the apical cell membrane. In terms of biological role, required for apical extracellular matrix organization and epithelial junction maintenance. This is Leucine-rich repeat-containing protein let-4 (let-4) from Caenorhabditis elegans.